The chain runs to 150 residues: 3-dehydroquinate dehydratase (150 aa).

Tyr-26 acts as the Proton acceptor in catalysis. Asn-75, His-81, and Asp-88 together coordinate substrate. His-101 functions as the Proton donor in the catalytic mechanism. Residues 102–103 (LS) and Arg-112 each bind substrate.

Belongs to the type-II 3-dehydroquinase family. As to quaternary structure, homododecamer.

The catalysed reaction is 3-dehydroquinate = 3-dehydroshikimate + H2O. It participates in metabolic intermediate biosynthesis; chorismate biosynthesis; chorismate from D-erythrose 4-phosphate and phosphoenolpyruvate: step 3/7. In terms of biological role, catalyzes a trans-dehydration via an enolate intermediate. In Shewanella loihica (strain ATCC BAA-1088 / PV-4), this protein is 3-dehydroquinate dehydratase.